A 256-amino-acid polypeptide reads, in one-letter code: tRNA-cytidine(32) 2-sulfurtransferase 1 (256 aa).

The short motif at 38–43 is the PP-loop motif element; the sequence is SGGKDS. Residues Cys-113, Cys-116, and Cys-204 each coordinate [4Fe-4S] cluster.

It belongs to the TtcA family. In terms of assembly, homodimer. Requires Mg(2+) as cofactor. [4Fe-4S] cluster is required as a cofactor.

Its subcellular location is the cytoplasm. It catalyses the reaction cytidine(32) in tRNA + S-sulfanyl-L-cysteinyl-[cysteine desulfurase] + AH2 + ATP = 2-thiocytidine(32) in tRNA + L-cysteinyl-[cysteine desulfurase] + A + AMP + diphosphate + H(+). It functions in the pathway tRNA modification. Functionally, catalyzes the ATP-dependent 2-thiolation of cytidine in position 32 of tRNA, to form 2-thiocytidine (s(2)C32). The sulfur atoms are provided by the cysteine/cysteine desulfurase (IscS) system. The sequence is that of tRNA-cytidine(32) 2-sulfurtransferase 1 from Francisella philomiragia subsp. philomiragia (strain ATCC 25017 / CCUG 19701 / FSC 153 / O#319-036).